The following is a 515-amino-acid chain: N-fatty-acyl-amino acid synthase/hydrolase PM20D1.1 (515 aa).

The signal sequence occupies residues 1–34 (MKTKFTKKTVLKFFGILFAILLLSVLILFSVVIG). Residues asparagine 50, asparagine 87, and asparagine 118 are each glycosylated (N-linked (GlcNAc...) asparagine). Position 140 (histidine 140) interacts with Zn(2+). The active site involves aspartate 142. Position 173 (aspartate 173) interacts with Zn(2+). Glutamate 207 serves as the catalytic Proton acceptor. Residues glutamate 208, aspartate 234, and histidine 480 each contribute to the Zn(2+) site.

It belongs to the peptidase M20A family. Requires Zn(2+) as cofactor.

Its subcellular location is the secreted. The catalysed reaction is an N-acyl-L-amino acid + H2O = an L-alpha-amino acid + a carboxylate. It catalyses the reaction an N-acyl-aromatic L-alpha-amino acid + H2O = an aromatic L-alpha-amino acid + a carboxylate. It carries out the reaction N-(5Z,8Z,11Z,14Z)-eicosatetraenoyl-glycine + H2O = (5Z,8Z,11Z,14Z)-eicosatetraenoate + glycine. The enzyme catalyses N-hexadecanoyl-L-phenylalanine + H2O = hexadecanoate + L-phenylalanine. The catalysed reaction is N-octadecanoyl-L-phenylalanine + H2O = octadecanoate + L-phenylalanine. It catalyses the reaction N-(4Z,7Z,10Z,13Z,16Z,19Z-docosahexaenoyl)-L-phenylalanine + H2O = (4Z,7Z,10Z,13Z,16Z,19Z)-docosahexaenoate + L-phenylalanine. It carries out the reaction N-(9Z-octadecenoyl)-L-asparagine + H2O = L-asparagine + (9Z)-octadecenoate. The enzyme catalyses (9Z)-octadecenoate + glycine = N-(9Z-octadecenoyl)glycine + H2O. The catalysed reaction is N-(9Z-octadecenoyl)-L-lysine + H2O = L-lysine + (9Z)-octadecenoate. It catalyses the reaction N-(9Z-octadecenoyl)-L-methionine + H2O = (9Z)-octadecenoate + L-methionine. It carries out the reaction N-(9Z-octadecenoyl)-L-serine + H2O = L-serine + (9Z)-octadecenoate. The enzyme catalyses N-(9Z-octadecenoyl)-L-tryptophan + H2O = L-tryptophan + (9Z)-octadecenoate. The catalysed reaction is N-(9Z-octadecenoyl)-L-tyrosine + H2O = L-tyrosine + (9Z)-octadecenoate. It catalyses the reaction N-(9Z-octadecenoyl)-L-glutamine + H2O = L-glutamine + (9Z)-octadecenoate. It carries out the reaction N-(5Z,8Z,11Z,14Z-eicosatetraenoyl)-L-serine + H2O = (5Z,8Z,11Z,14Z)-eicosatetraenoate + L-serine. The enzyme catalyses (5Z,8Z,11Z,14Z)-eicosatetraenoate + L-phenylalanine = N-(5Z,8Z,11Z,14Z-eicosatetraenoyl)-L-phenylalanine + H2O. The catalysed reaction is N-(9Z-octadecenoyl)-L-leucine + H2O = L-leucine + (9Z)-octadecenoate. It catalyses the reaction L-phenylalanine + (9Z)-octadecenoate = N-(9Z-octadecenoyl)-L-phenylalanine + H2O. It functions in the pathway amino-acid metabolism. Its pathway is energy metabolism; electron transfer. It participates in lipid metabolism; fatty acid metabolism. Its activity is regulated as follows. Lipoproteins are powerful coactivators of PM20D1 activity in vitro and NAA biosynthesis in vivo. Functionally, secreted enzyme that regulates the endogenous N-fatty acyl amino acid (NAAs) tissue and circulating levels by functioning as a bidirectional NAA synthase/hydrolase. It condenses free fatty acids and free amino acids to generate NAAs and bidirectionally catalyzes the reverse hydrolysis reaction. Some of these NAAs stimulate oxidative metabolism via mitochondrial uncoupling, increasing energy expenditure in a UPC1-independent manner. Thereby, this secreted protein may indirectly regulate whole body energy expenditure. PM20D1 circulates in tight association with both low- and high-density (LDL and HDL,respectively) lipoprotein particles. The protein is N-fatty-acyl-amino acid synthase/hydrolase PM20D1.1 of Danio rerio (Zebrafish).